A 322-amino-acid polypeptide reads, in one-letter code: NAD(P)H-dependent D-xylose reductase (322 aa).

Tyrosine 52 functions as the Proton donor in the catalytic mechanism. A substrate-binding site is contributed by histidine 114. Residues 169–170 (SN), 218–227 (SSFGPQSFVE), and 274–284 (KSNLPERLVQN) contribute to the NAD(+) site.

This sequence belongs to the aldo/keto reductase family. Homodimer.

It catalyses the reaction xylitol + NAD(+) = D-xylose + NADH + H(+). It carries out the reaction xylitol + NADP(+) = D-xylose + NADPH + H(+). It functions in the pathway carbohydrate metabolism; D-xylose degradation. Functionally, reduces D-xylose into xylitol. Has a preference for NADPH, but can also utilize NADH as cosubstrate. This is NAD(P)H-dependent D-xylose reductase (XYL1) from Candida tenuis (Yeast).